The sequence spans 88 residues: MATKIRLARAGAKRKPFYQVVVADERCKRDGRFIENVGTYDPNQNPAVFKLEEAKTLEWLGKGAQPTDTVKQILKKAGIWEKFVSKLA.

The protein belongs to the bacterial ribosomal protein bS16 family.

The sequence is that of Small ribosomal subunit protein bS16 from Geotalea uraniireducens (strain Rf4) (Geobacter uraniireducens).